We begin with the raw amino-acid sequence, 526 residues long: Cytochrome P450 monooxygenase patI (526 aa).

The Cytoplasmic segment spans residues 1–6 (MDILQL). The chain crosses the membrane as a helical span at residues 7–29 (APTHLLAILLSSTSALFLITYLL). Residues 30–526 (RAGHRPSDLP…EAQEVFARFD (497 aa)) are Lumenal-facing. N-linked (GlcNAc...) asparagine glycosylation occurs at Asn-81. Cys-446 contacts heme.

Belongs to the cytochrome P450 family. The cofactor is heme.

It is found in the endoplasmic reticulum membrane. The catalysed reaction is 3-hydroxybenzyl alcohol + reduced [NADPH--hemoprotein reductase] + O2 = gentisyl alcohol + oxidized [NADPH--hemoprotein reductase] + H2O + H(+). It functions in the pathway mycotoxin biosynthesis; patulin biosynthesis. In terms of biological role, cytochrome P450 monooxygenase; part of the gene cluster that mediates the biosynthesis of patulin, an acetate-derived tetraketide mycotoxin produced by several fungal species that shows antimicrobial properties against several bacteria. PatI catalyzes the conversion of m-hydroxybenzyl alcohol into gentisyl alcohol. The pathway begins with the synthesis of 6-methylsalicylic acid by the polyketide synthase (PKS) patK via condensation of acetate and malonate units. The 6-methylsalicylic acid decarboxylase patG then catalyzes the decarboxylation of 6-methylsalicylic acid to yield m-cresol (also known as 3-methylphenol). These first reactions occur in the cytosol. The intermediate m-cresol is then transported into the endoplasmic reticulum where the cytochrome P450 monooxygenase patH converts it to m-hydroxybenzyl alcohol, which is further converted to gentisyl alcohol by the cytochrome P450 monooxygenase patI. The oxidoreductases patJ and patO further convert gentisyl alcohol to isoepoxydon in the vacuole. PatN catalyzes then the transformation of isoepoxydon into phyllostine. The cluster protein patF is responsible for the conversion from phyllostine to neopatulin whereas the alcohol dehydrogenase patD converts neopatulin to E-ascladiol. The steps between isoepoxydon and E-ascladiol occur in the cytosol, and E-ascladiol is probably secreted to the extracellular space by one of the cluster-specific transporters patC or patM. Finally, the secreted patulin synthase patE catalyzes the conversion of E-ascladiol to patulin. In Penicillium expansum (Blue mold rot fungus), this protein is Cytochrome P450 monooxygenase patI.